Here is a 284-residue protein sequence, read N- to C-terminus: Tropomyosin alpha-1 chain (284 aa).

The tract at residues 1–40 is disordered; the sequence is MDAIKKKMQMLKLDKENALDRAEQAEADKKGAEDKSKQLE. A coiled-coil region spans residues 1–284; it reads MDAIKKKMQM…DHALNDMTSI (284 aa). The segment covering 12–40 has biased composition (basic and acidic residues); the sequence is KLDKENALDRAEQAEADKKGAEDKSKQLE.

Belongs to the tropomyosin family. As to quaternary structure, homodimer. Heterodimer of an alpha (TPM1, TPM3 or TPM4) and a beta (TPM2) chain.

It localises to the cytoplasm. Its subcellular location is the cytoskeleton. Binds to actin filaments in muscle and non-muscle cells. Plays a central role, in association with the troponin complex, in the calcium dependent regulation of vertebrate striated muscle contraction. Smooth muscle contraction is regulated by interaction with caldesmon. In non-muscle cells is implicated in stabilizing cytoskeleton actin filaments. The protein is Tropomyosin alpha-1 chain (tpm1) of Rana temporaria (European common frog).